Reading from the N-terminus, the 415-residue chain is Tyrosine--tRNA ligase (415 aa).

A 'HIGH' region motif is present at residues P54 to H63. The short motif at K248–T252 is the 'KMSKS' region element. Residue K251 coordinates ATP. The 65-residue stretch at A351–A415 folds into the S4 RNA-binding domain.

This sequence belongs to the class-I aminoacyl-tRNA synthetase family. TyrS type 2 subfamily. As to quaternary structure, homodimer.

It is found in the cytoplasm. The enzyme catalyses tRNA(Tyr) + L-tyrosine + ATP = L-tyrosyl-tRNA(Tyr) + AMP + diphosphate + H(+). In terms of biological role, catalyzes the attachment of tyrosine to tRNA(Tyr) in a two-step reaction: tyrosine is first activated by ATP to form Tyr-AMP and then transferred to the acceptor end of tRNA(Tyr). The chain is Tyrosine--tRNA ligase from Synechococcus sp. (strain CC9902).